We begin with the raw amino-acid sequence, 357 residues long: Tetraacyldisaccharide 4'-kinase (357 aa).

49-56 (TIGGTGKT) lines the ATP pocket.

The protein belongs to the LpxK family.

It carries out the reaction a lipid A disaccharide + ATP = a lipid IVA + ADP + H(+). Its pathway is glycolipid biosynthesis; lipid IV(A) biosynthesis; lipid IV(A) from (3R)-3-hydroxytetradecanoyl-[acyl-carrier-protein] and UDP-N-acetyl-alpha-D-glucosamine: step 6/6. In terms of biological role, transfers the gamma-phosphate of ATP to the 4'-position of a tetraacyldisaccharide 1-phosphate intermediate (termed DS-1-P) to form tetraacyldisaccharide 1,4'-bis-phosphate (lipid IVA). The chain is Tetraacyldisaccharide 4'-kinase from Porphyromonas gingivalis (strain ATCC BAA-308 / W83).